The primary structure comprises 393 residues: S-adenosylmethionine synthase (393 aa).

His-16 serves as a coordination point for ATP. Mg(2+) is bound at residue Asp-18. K(+) is bound at residue Glu-44. Glu-57 and Gln-100 together coordinate L-methionine. Residues Gln-100–His-110 form a flexible loop region. Residues Asp-167–Lys-169, Arg-238–Phe-239, Asp-247, Arg-253–Lys-254, Ala-270, and Lys-274 contribute to the ATP site. Asp-247 serves as a coordination point for L-methionine. Residue Lys-278 coordinates L-methionine.

This sequence belongs to the AdoMet synthase family. In terms of assembly, homotetramer; dimer of dimers. It depends on Mg(2+) as a cofactor. The cofactor is K(+).

It localises to the cytoplasm. The catalysed reaction is L-methionine + ATP + H2O = S-adenosyl-L-methionine + phosphate + diphosphate. It participates in amino-acid biosynthesis; S-adenosyl-L-methionine biosynthesis; S-adenosyl-L-methionine from L-methionine: step 1/1. Functionally, catalyzes the formation of S-adenosylmethionine (AdoMet) from methionine and ATP. The overall synthetic reaction is composed of two sequential steps, AdoMet formation and the subsequent tripolyphosphate hydrolysis which occurs prior to release of AdoMet from the enzyme. The polypeptide is S-adenosylmethionine synthase (Paracidovorax citrulli (strain AAC00-1) (Acidovorax citrulli)).